The primary structure comprises 74 residues: UPF0154 protein OB1676 (74 aa).

A helical transmembrane segment spans residues 4–24; that stretch reads IWVVLIAIAALVAGVALGFFI.

Belongs to the UPF0154 family.

It localises to the membrane. This chain is UPF0154 protein OB1676, found in Oceanobacillus iheyensis (strain DSM 14371 / CIP 107618 / JCM 11309 / KCTC 3954 / HTE831).